We begin with the raw amino-acid sequence, 259 residues long: Haloacid dehalogenase-like hydrolase domain-containing protein 2 (259 aa).

The Mg(2+) site is built by D13 and S15. Substrate-binding positions include 13–15 (DLS) and 46–47 (TN). A coiled-coil region spans residues 47–71 (NTTKESKQDLLERLKKLEFDISEDE). Position 50 is an N6-succinyllysine (K50). K179 lines the substrate pocket. D204 contacts Mg(2+).

Belongs to the HAD-like hydrolase superfamily. Mg(2+) is required as a cofactor.

The protein is Haloacid dehalogenase-like hydrolase domain-containing protein 2 (HDHD2) of Bos taurus (Bovine).